The chain runs to 649 residues: DNA mismatch repair protein MutL (649 aa).

This sequence belongs to the DNA mismatch repair MutL/HexB family.

This protein is involved in the repair of mismatches in DNA. It is required for dam-dependent methyl-directed DNA mismatch repair. May act as a 'molecular matchmaker', a protein that promotes the formation of a stable complex between two or more DNA-binding proteins in an ATP-dependent manner without itself being part of a final effector complex. The chain is DNA mismatch repair protein MutL from Streptococcus pneumoniae (strain P1031).